We begin with the raw amino-acid sequence, 485 residues long: Rhamnulokinase (485 aa).

10–14 (ASSGR) contacts ATP. Substrate-binding positions include A78 and 233–235 (HDT). Catalysis depends on D234, which acts as the Proton acceptor. T256 serves as a coordination point for ATP. N293 is a substrate binding site. Q301 is a binding site for ATP. An intrachain disulfide couples C351 to C368. ATP is bound at residue G400.

It belongs to the rhamnulokinase family. The cofactor is Mg(2+).

The enzyme catalyses L-rhamnulose + ATP = L-rhamnulose 1-phosphate + ADP + H(+). It participates in carbohydrate degradation; L-rhamnose degradation; glycerone phosphate from L-rhamnose: step 2/3. Its function is as follows. Involved in the catabolism of L-rhamnose (6-deoxy-L-mannose). Catalyzes the transfer of the gamma-phosphate group from ATP to the 1-hydroxyl group of L-rhamnulose to yield L-rhamnulose 1-phosphate. This chain is Rhamnulokinase, found in Bacillus subtilis (strain 168).